We begin with the raw amino-acid sequence, 463 residues long: Asparagine--tRNA ligase (463 aa).

The protein belongs to the class-II aminoacyl-tRNA synthetase family. Homodimer.

The protein localises to the cytoplasm. It carries out the reaction tRNA(Asn) + L-asparagine + ATP = L-asparaginyl-tRNA(Asn) + AMP + diphosphate + H(+). This chain is Asparagine--tRNA ligase, found in Clostridium botulinum (strain Langeland / NCTC 10281 / Type F).